A 198-amino-acid chain; its full sequence is NAD(P)H dehydrogenase (quinone) (198 aa).

The Flavodoxin-like domain maps to 4-189 (VLVLYYSMYG…SIARYQGEYV (186 aa)). Residues 10-15 (SMYGHI) and 78-80 (TRF) each bind FMN. Tyrosine 12 is a binding site for NAD(+). Substrate is bound at residue tryptophan 98. Residues 113-118 (STGTGG) and histidine 133 each bind FMN.

Belongs to the WrbA family. It depends on FMN as a cofactor.

The enzyme catalyses a quinone + NADH + H(+) = a quinol + NAD(+). It catalyses the reaction a quinone + NADPH + H(+) = a quinol + NADP(+). In Escherichia coli (strain SE11), this protein is NAD(P)H dehydrogenase (quinone).